The primary structure comprises 238 residues: Ribose-5-phosphate isomerase A (238 aa).

Substrate is bound by residues 30 to 33, 87 to 90, and 100 to 103; these read SGST, DGAD, and KGGG. The active-site Proton acceptor is the Glu-109. Lys-127 contacts substrate.

The protein belongs to the ribose 5-phosphate isomerase family. Homodimer.

It catalyses the reaction aldehydo-D-ribose 5-phosphate = D-ribulose 5-phosphate. Its pathway is carbohydrate degradation; pentose phosphate pathway; D-ribose 5-phosphate from D-ribulose 5-phosphate (non-oxidative stage): step 1/1. Catalyzes the reversible conversion of ribose-5-phosphate to ribulose 5-phosphate. This chain is Ribose-5-phosphate isomerase A, found in Synechococcus sp. (strain WH7803).